A 123-amino-acid polypeptide reads, in one-letter code: Cysteine proteinase inhibitor 8 (123 aa).

Positions 1-19 (MARIPLLLALLLAVSAAAA) are cleaved as a signal peptide. One can recognise a Cystatin domain in the interval 33-91 (GGWSPITDVGDPHIQELGGWAVERHASLSSDGLRFRRVTSGEQQVVSGMNYRLVVSASD). Residues 76–80 (QVVSG) carry the Secondary area of contact motif.

The protein belongs to the cystatin family. Phytocystatin subfamily.

Its subcellular location is the secreted. Specific inhibitor of cysteine proteinases. Probably involved in the regulation of endogenous processes and in defense against pests and pathogens. This Oryza sativa subsp. japonica (Rice) protein is Cysteine proteinase inhibitor 8.